The chain runs to 445 residues: CBL-interacting protein kinase 3 (445 aa).

Positions Tyr-19–Phe-274 constitute a Protein kinase domain. ATP is bound by residues Ile-25–Val-33 and Lys-48. Asp-142 functions as the Proton acceptor in the catalytic mechanism. Positions Asp-160–Glu-189 are activation loop. The 28-residue stretch at Ala-309–Glu-336 folds into the NAF domain. The PPI stretch occupies residues Lys-342–Ile-371.

Belongs to the protein kinase superfamily. CAMK Ser/Thr protein kinase family. SNF1 subfamily. Requires Mn(2+) as cofactor.

The enzyme catalyses L-seryl-[protein] + ATP = O-phospho-L-seryl-[protein] + ADP + H(+). It carries out the reaction L-threonyl-[protein] + ATP = O-phospho-L-threonyl-[protein] + ADP + H(+). Its function is as follows. CIPK serine-threonine protein kinases interact with CBL proteins. Binding of a CBL protein to the regulatory NAF domain of CIPK protein lead to the activation of the kinase in a calcium-dependent manner. This chain is CBL-interacting protein kinase 3 (CIPK3), found in Oryza sativa subsp. japonica (Rice).